The primary structure comprises 135 residues: Fatty acid-binding protein 5 (135 aa).

At alanine 2 the chain carries N-acetylalanine. An N6-acetyllysine modification is found at lysine 17. Tyrosine 22 is subject to Phosphotyrosine; by Tyr-kinases. A Nuclear localization signal motif is present at residues 24 to 34 (KEVGVGMALRK). Residues cysteine 43 and arginine 109 each coordinate N-eicosanoyl ethanolamine. The cysteines at positions 120 and 127 are disulfide-linked. 129–131 (RVY) contacts (9Z,12Z)-octadecadienoate. Tyrosine 131 contacts N-eicosanoyl ethanolamine. Residue tyrosine 131 participates in hexadecanoate binding. Position 131 is a phosphotyrosine (tyrosine 131).

It belongs to the calycin superfamily. Fatty-acid binding protein (FABP) family. In terms of assembly, monomer. Most abundant in lens and retina (found in the mueller cells), moderately abundant in heart and testis (found in the Sertoli cells), and present in very low amounts in lung.

Its subcellular location is the cytoplasm. It localises to the nucleus. The protein resides in the synapse. It is found in the postsynaptic density. The protein localises to the secreted. It catalyses the reaction hexadecanoate(out) = hexadecanoate(in). The catalysed reaction is (9Z,12Z)-octadecadienoate(out) = (9Z,12Z)-octadecadienoate(in). The enzyme catalyses (9Z)-octadecenoate(out) = (9Z)-octadecenoate(in). In terms of biological role, intracellular carrier for long-chain fatty acids and related active lipids, such as endocannabinoids, that regulate the metabolism and actions of the ligands they bind. In addition to the cytosolic transport, selectively delivers specific fatty acids from the cytosol to the nucleus, wherein they activate nuclear receptors. Delivers retinoic acid to the nuclear receptor peroxisome proliferator-activated receptor delta; which promotes proliferation and survival. May also serve as a synaptic carrier of endocannabinoid at central synapses and thus controls retrograde endocannabinoid signaling. Modulates inflammation by regulating PTGES induction via NF-kappa-B activation, and prostaglandin E2 (PGE2) biosynthesis during inflammation. The sequence is that of Fatty acid-binding protein 5 (FABP5) from Bos taurus (Bovine).